We begin with the raw amino-acid sequence, 197 residues long: Probable nicotinate-nucleotide adenylyltransferase (197 aa).

The protein belongs to the NadD family.

It catalyses the reaction nicotinate beta-D-ribonucleotide + ATP + H(+) = deamido-NAD(+) + diphosphate. Its pathway is cofactor biosynthesis; NAD(+) biosynthesis; deamido-NAD(+) from nicotinate D-ribonucleotide: step 1/1. Its function is as follows. Catalyzes the reversible adenylation of nicotinate mononucleotide (NaMN) to nicotinic acid adenine dinucleotide (NaAD). The polypeptide is Probable nicotinate-nucleotide adenylyltransferase (Chlorobium phaeobacteroides (strain DSM 266 / SMG 266 / 2430)).